A 727-amino-acid chain; its full sequence is 5'-AMP-activated serine/threonine-protein kinase catalytic subunit alpha (727 aa).

One can recognise a Protein kinase domain in the interval 31-284; sequence YRLDKTLGIG…IHEIRNHPWF (254 aa). ATP contacts are provided by residues 37–45 and Lys60; that span reads LGIGSFGKV. Asp154 functions as the Proton acceptor in the catalytic mechanism. Thr188 is modified (phosphothreonine). Residues 382–590 form a disordered region; the sequence is FTTTTGFNPS…GSNNNSYEGG (209 aa). 2 stretches are compositionally biased toward low complexity: residues 391–483 and 494–586; these read SNSN…SSIS and NLNN…NNNS. One can recognise a KA1 domain in the interval 679–727; that stretch reads RMVNGKPIKLVLQLFRVAENRYLLDIKKIEGEIFIFFDICSLMLEELNL.

It belongs to the protein kinase superfamily. CAMK Ser/Thr protein kinase family. SNF1 subfamily. In terms of assembly, heterotrimer of an alpha catalytic subunit, a beta and a gamma non-catalytic subunits.

It carries out the reaction L-seryl-[protein] + ATP = O-phospho-L-seryl-[protein] + ADP + H(+). The enzyme catalyses L-threonyl-[protein] + ATP = O-phospho-L-threonyl-[protein] + ADP + H(+). Activated enzyme phosphorylates target proteins and initiates downstream signaling pathways that shift metabolism from anabolic to catabolic pathways. Acts as a highly sensitive cellular energy sensor. This chain is 5'-AMP-activated serine/threonine-protein kinase catalytic subunit alpha (snfA), found in Dictyostelium discoideum (Social amoeba).